We begin with the raw amino-acid sequence, 282 residues long: Phosphoglycerate mutase-like protein 1 (282 aa).

The active-site Tele-phosphohistidine intermediate is histidine 23. The active-site Proton donor/acceptor is glutamate 135.

Belongs to the phosphoglycerate mutase family.

Functionally, may play a role in carbohydrates metabolism. The sequence is that of Phosphoglycerate mutase-like protein 1 from Arabidopsis thaliana (Mouse-ear cress).